Reading from the N-terminus, the 130-residue chain is Small ribosomal subunit protein uS9 (130 aa).

A disordered region spans residues 105–130 (TRDARMKERKKPGLKKARKASQFSKR). Over residues 111–130 (KERKKPGLKKARKASQFSKR) the composition is skewed to basic residues.

It belongs to the universal ribosomal protein uS9 family.

The polypeptide is Small ribosomal subunit protein uS9 (Lactiplantibacillus plantarum (strain ATCC BAA-793 / NCIMB 8826 / WCFS1) (Lactobacillus plantarum)).